A 721-amino-acid chain; its full sequence is Choline O-acetyltransferase (721 aa).

The Proton acceptor role is filled by H419. CoA is bound by residues 496–508 (GKTF…VSPD), S534, and Q656.

The protein belongs to the carnitine/choline acetyltransferase family. In terms of assembly, the 54 kDa and 13 kDa chains exist as a heterodimer. Post-translationally, the N-terminus of choline O-acetyltransferase 67 kDa and 54 kDa chains are blocked.

It catalyses the reaction choline + acetyl-CoA = acetylcholine + CoA. Catalyzes the reversible synthesis of acetylcholine (ACh) from acetyl CoA and choline at cholinergic synapses. This chain is Choline O-acetyltransferase, found in Drosophila melanogaster (Fruit fly).